The primary structure comprises 156 residues: Pilin-like protein PilA1 (156 aa).

The propeptide at 1 to 5 (MTRRG) is leader sequence. An N-methylleucine modification is found at Leu-6. A helical transmembrane segment spans residues 6–29 (LTLLELLLVLGILGVLLGLALPLL).

The protein localises to the cell inner membrane. It localises to the cell outer membrane. The protein resides in the periplasm. Its function is as follows. Plays an essential role in natural DNA transformation but is not required for pilus biogenesis. In Thermus thermophilus (strain ATCC BAA-163 / DSM 7039 / HB27), this protein is Pilin-like protein PilA1 (pilA1).